We begin with the raw amino-acid sequence, 280 residues long: Acyl-[acyl-carrier-protein]--UDP-N-acetylglucosamine O-acyltransferase (280 aa).

The protein belongs to the transferase hexapeptide repeat family. LpxA subfamily. In terms of assembly, homotrimer.

It localises to the cytoplasm. The enzyme catalyses a (3R)-hydroxyacyl-[ACP] + UDP-N-acetyl-alpha-D-glucosamine = a UDP-3-O-[(3R)-3-hydroxyacyl]-N-acetyl-alpha-D-glucosamine + holo-[ACP]. Its pathway is glycolipid biosynthesis; lipid IV(A) biosynthesis; lipid IV(A) from (3R)-3-hydroxytetradecanoyl-[acyl-carrier-protein] and UDP-N-acetyl-alpha-D-glucosamine: step 1/6. Functionally, involved in the biosynthesis of lipid A, a phosphorylated glycolipid that anchors the lipopolysaccharide to the outer membrane of the cell. The chain is Acyl-[acyl-carrier-protein]--UDP-N-acetylglucosamine O-acyltransferase from Chlamydia trachomatis serovar A (strain ATCC VR-571B / DSM 19440 / HAR-13).